The primary structure comprises 340 residues: GTPase Obg (340 aa).

Positions 1 to 159 (MDFIDEVKLY…KYVVLKLKVL (159 aa)) constitute an Obg domain. The OBG-type G domain maps to 160-329 (SDVGIIGMPN…LNEKLKKGSS (170 aa)). Residues 166–173 (GMPNAGKS), 191–195 (FTTIK), 212–215 (DIPG), 279–282 (NKCD), and 310–312 (GED) contribute to the GTP site. Positions 173 and 193 each coordinate Mg(2+).

It belongs to the TRAFAC class OBG-HflX-like GTPase superfamily. OBG GTPase family. Monomer. It depends on Mg(2+) as a cofactor.

It localises to the cytoplasm. An essential GTPase which binds GTP, GDP and possibly (p)ppGpp with moderate affinity, with high nucleotide exchange rates and a fairly low GTP hydrolysis rate. Plays a role in control of the cell cycle, stress response, ribosome biogenesis and in those bacteria that undergo differentiation, in morphogenesis control. The chain is GTPase Obg from Wolbachia sp. subsp. Brugia malayi (strain TRS).